A 161-amino-acid chain; its full sequence is Large ribosomal subunit protein uL15 (161 aa).

Positions 1 to 43 (MKLSDIADNAGARKKRMRVGRGIGSGKGKTSGRGGKGQTARSG) are disordered. Over residues 21 to 37 (RGIGSGKGKTSGRGGKG) the composition is skewed to gly residues.

The protein belongs to the universal ribosomal protein uL15 family. As to quaternary structure, part of the 50S ribosomal subunit.

Functionally, binds to the 23S rRNA. This Bradyrhizobium sp. (strain BTAi1 / ATCC BAA-1182) protein is Large ribosomal subunit protein uL15.